The primary structure comprises 355 residues: Agamous-like MADS-box protein AGL81 (355 aa).

The tract at residues 1-22 (MAIRSLPSSSRCSSSSSSSSYS) is disordered. Residues 26–68 (TSLSNRLETIFKKASELCTLCDIEACVIYYGPDGELKTWPPER) form the MADS-box domain. The span at 162 to 174 (VESQKHKETKPDH) shows a compositional bias: basic and acidic residues. Positions 162–186 (VESQKHKETKPDHQSLASSSLNHQT) are disordered. A compositionally biased stretch (polar residues) spans 176–186 (SLASSSLNHQT).

Interacts with MEE14/CBP1.

It is found in the nucleus. Probable transcription factor that may function in the maintenance of the proper function of the central cell in pollen tube attraction. This is Agamous-like MADS-box protein AGL81 from Arabidopsis thaliana (Mouse-ear cress).